Reading from the N-terminus, the 498-residue chain is Cytochrome P450 monooxygenase 110 (498 aa).

Residues 7–24 (YVFALLGILATLYFVRWS) traverse the membrane as a helical segment. Asn-425 carries N-linked (GlcNAc...) asparagine glycosylation. Cys-440 provides a ligand contact to heme.

The protein belongs to the cytochrome P450 family. Requires heme as cofactor.

The protein resides in the membrane. Its pathway is secondary metabolite biosynthesis. Its function is as follows. Cytochrome P450 monooxygenase that is able to use dehydroabietic acid and testosterone as substrates for oxidation, suggesting that the natural substrate(s) may be structurally related to steroid compounds. This Postia placenta (strain ATCC 44394 / Madison 698-R) (Brown rot fungus) protein is Cytochrome P450 monooxygenase 110.